A 563-amino-acid chain; its full sequence is MTTKYTIGVDYGTESGRAVLIDLSNGQELADHVTPYRHGVIDQYLPNTNIKLGHEWALQHPLDYVEVLTTSVPAVMKESGVDADDVIGIGVDFTACTMLPVDEEGQPLCLLAQYKDNPHSWVKLWKHHAAQDKANAINEMAEKRGEAFLPRYGGKISSEWMIAKVWQILDEAEDVYNRTDQFLEATDWIVSQMTGKIVKNSCTAGYKAIWHKREGYPSNEFFKALDPRLEHLTTTKLRGDIVPLGERAGGLLPEMAEKMGLNPGIAVAVGNVDAHAAVPAVGVTTPGKLVMAMGTSICHMLLGEKEQEVEGMCGVVEDGIIPGYLGYEAGQSAVGDIFAWFVKHGVSAATFDEAQEKGVNVHALLEEKASQLRPGESGLLALDWWNGNRSILVDTELSGMLLGYTLQTKPEEIYRALLEATAFGTRAIVDAFHGRGVEVHELYACGGLPQKNHLLMQIFADVTNREIKVAASKQTPALGAAMFASVAAGSEVGGYDSIEEAAKKMGRVKDETFKPIPEHVAIYEKLYQEYVTLHDYFGRGANDVMKRLKALKSIQHRPSSLLT.

This sequence belongs to the ribulokinase family.

The catalysed reaction is D-ribulose + ATP = D-ribulose 5-phosphate + ADP + H(+). It catalyses the reaction L-ribulose + ATP = L-ribulose 5-phosphate + ADP + H(+). Its pathway is carbohydrate degradation; L-arabinose degradation via L-ribulose; D-xylulose 5-phosphate from L-arabinose (bacterial route): step 2/3. This chain is Ribulokinase, found in Halalkalibacterium halodurans (strain ATCC BAA-125 / DSM 18197 / FERM 7344 / JCM 9153 / C-125) (Bacillus halodurans).